A 259-amino-acid chain; its full sequence is Phosphatidylglycerol--prolipoprotein diacylglyceryl transferase (259 aa).

4 helical membrane-spanning segments follow: residues isoleucine 9–isoleucine 29, phenylalanine 55–tyrosine 75, glutamate 92–cysteine 112, and valine 117–glycine 137. Arginine 138 lines the a 1,2-diacyl-sn-glycero-3-phospho-(1'-sn-glycerol) pocket. A run of 3 helical transmembrane segments spans residues glutamine 172–phenylalanine 192, glycine 201–phenylalanine 221, and isoleucine 228–leucine 248.

This sequence belongs to the Lgt family.

The protein localises to the cell inner membrane. The enzyme catalyses L-cysteinyl-[prolipoprotein] + a 1,2-diacyl-sn-glycero-3-phospho-(1'-sn-glycerol) = an S-1,2-diacyl-sn-glyceryl-L-cysteinyl-[prolipoprotein] + sn-glycerol 1-phosphate + H(+). Its pathway is protein modification; lipoprotein biosynthesis (diacylglyceryl transfer). Functionally, catalyzes the transfer of the diacylglyceryl group from phosphatidylglycerol to the sulfhydryl group of the N-terminal cysteine of a prolipoprotein, the first step in the formation of mature lipoproteins. The chain is Phosphatidylglycerol--prolipoprotein diacylglyceryl transferase from Rickettsia akari (strain Hartford).